Consider the following 416-residue polypeptide: Argininosuccinate synthase (416 aa).

ATP-binding positions include 11–19 (AYSGGLDTS) and Ala-37. Tyr-88 serves as a coordination point for L-citrulline. Residues Tyr-88 and Tyr-114 each carry the phosphotyrosine modification. 116–124 (AHGATGKGN) lines the ATP pocket. Residues Thr-120, Asn-124, and Asp-125 each contribute to the L-aspartate site. Position 124 (Asn-124) interacts with L-citrulline. L-citrulline contacts are provided by Arg-128, Ser-181, Ser-190, Glu-271, and Tyr-283. A Phosphoserine modification is found at Ser-181.

It belongs to the argininosuccinate synthase family. Homotetramer.

Its subcellular location is the cytoplasm. The protein localises to the cytosol. It catalyses the reaction L-citrulline + L-aspartate + ATP = 2-(N(omega)-L-arginino)succinate + AMP + diphosphate + H(+). It functions in the pathway amino-acid biosynthesis; L-arginine biosynthesis; L-arginine from L-ornithine and carbamoyl phosphate: step 2/3. It participates in nitrogen metabolism; urea cycle; (N(omega)-L-arginino)succinate from L-aspartate and L-citrulline: step 1/1. Its function is as follows. One of the enzymes of the urea cycle, the metabolic pathway transforming neurotoxic amonia produced by protein catabolism into inocuous urea in the liver of ureotelic animals. Catalyzes the formation of arginosuccinate from aspartate, citrulline and ATP and together with ASL it is responsible for the biosynthesis of arginine in most body tissues. The polypeptide is Argininosuccinate synthase (Gallus gallus (Chicken)).